Consider the following 190-residue polypeptide: Lipid A acyltransferase PagP (190 aa).

Positions 1–29 are cleaved as a signal peptide; sequence MYVAMIIRKYFLIIALLVMPWLAIPSVSA. Active-site residues include histidine 62, aspartate 105, and serine 106.

It belongs to the lipid A palmitoyltransferase family. In terms of assembly, homodimer.

The protein localises to the cell outer membrane. The enzyme catalyses a lipid A + a 1,2-diacyl-sn-glycero-3-phosphocholine = a hepta-acyl lipid A + a 2-acyl-sn-glycero-3-phosphocholine. The catalysed reaction is a lipid IVA + a 1,2-diacyl-sn-glycero-3-phosphocholine = a lipid IVB + a 2-acyl-sn-glycero-3-phosphocholine. It catalyses the reaction a lipid IIA + a 1,2-diacyl-sn-glycero-3-phosphocholine = a lipid IIB + a 2-acyl-sn-glycero-3-phosphocholine. In terms of biological role, transfers a fatty acid residue from the sn-1 position of a phospholipid to the N-linked hydroxyfatty acid chain on the proximal unit of lipid A or its precursors. This chain is Lipid A acyltransferase PagP, found in Salmonella typhi.